A 948-amino-acid polypeptide reads, in one-letter code: MASSIRRGLGAWTRLLSLLLLAAWEVGSGQLRYSVPEEAKHGTFVGRIAQDLGLELAELVPRLFRVASKRHGDLLEVNLQNGILFVNSRIDREELCGRSAECSIHLEVIVDRPLQVFHVEVEVKDINDNPPVFPMTVKTIRFPESRLLDSRFPLEGASDADIGVNALLSYKLSSSEFFFLDIQTNDELSESLSLVLGKSLDREETAEVNLLLVATDGGKPELTGTVQILIKVLDVNDNEPTFAQSVYKVKLLENTANGTLVVKLNASDADEGSNSEIVYSLGSDVSSTIQTKFTIDPISGEIRTKGKLDYEEAKSYEIQVTATDKGTPSMSGHCKISLKLVDINDNTPEVSITSLSLPISENASLGTVIALITVSDRDSGTNGHVTCSLTPHVPFKLVSTFKNYYSLVLDSALDRESVSAYELVVTARDGGSPSLWATTSVSIEVADVNDNAPAFAQPEYTVFVKENNPPGCHIFTVSAWDADAQENALVSYSLVERRVGERALSSYVSVHAESGKVYALQPLDHEEVELLQFQVTARDAGVPPLGSNVTLQVFVLDENDNAPALLAPRAGTAAGAVSELVPWSVGAGHVVAKVRAVDADSGYNAWLSYELQLGTGSARIPFRVGLYTGEISTTRALDEADSPRHRLLVLVKDHGEPALTATATVLVSLVESGQAPKASSRAWVGAAGSEATLVDVNVYLIIAICAVSSLLVLTVLLYTALRCSVPATEGARAPGKPTLVCSSAVGSWSYSQQRRQRVCSGEDPPKTDLMAFSPSLSQGPDSAEEKQLSESEYVGKPRQPNPDWRYSASLRAGMHSSVHLEEAGILRAGPGGPDQQWPTVSSATPEPEAGEVSPPVGAGVNSNSWTFKYGPGNPKQSGPGELPDKFIIPGSPAIISIRQEPANSQIDKSDFITFGKKEETKKKKKKKKGNKTQEKKEKGNSTTDNSDQ.

The first 22 residues, 1–22, serve as a signal peptide directing secretion; sequence MASSIRRGLGAWTRLLSLLLLA. The Extracellular segment spans residues 23 to 697; the sequence is AWEVGSGQLR…GSEATLVDVN (675 aa). Cadherin domains lie at 30-133, 157-242, 243-350, 351-455, 456-565, and 588-678; these read QLRY…PPVF, ASDA…EPTF, AQSV…TPEV, SITS…APAF, AQPE…APAL, and GHVV…APKA. N-linked (GlcNAc...) asparagine glycans are attached at residues N257, N265, N362, and N548. Residues 698–718 form a helical membrane-spanning segment; that stretch reads VYLIIAICAVSSLLVLTVLLY. At 719–948 the chain is on the cytoplasmic side; the sequence is TALRCSVPAT…GNSTTDNSDQ (230 aa). The PXXP 1 repeat unit spans residues 734-737; sequence PGKP. The 5 X 4 AA repeats of P-X-X-P stretch occupies residues 734 to 892; sequence PGKPTLVCSS…PDKFIIPGSP (159 aa). Disordered regions lie at residues 755–801, 829–854, and 868–948; these read RQRV…RQPN, GPGG…EVSP, and KYGP…NSDQ. Positions 783-795 are enriched in basic and acidic residues; it reads AEEKQLSESEYVG. PXXP repeat units follow at residues 797-800, 830-833, 871-874, and 889-892; these read PRQP, PGGP, PGNP, and PGSP. The segment covering 907–921 has biased composition (basic and acidic residues); the sequence is DKSDFITFGKKEETK.

It is found in the cell membrane. Potential calcium-dependent cell-adhesion protein. May be involved in the establishment and maintenance of specific neuronal connections in the brain. This is Protocadherin alpha-2 (PCDHA2) from Pan troglodytes (Chimpanzee).